Reading from the N-terminus, the 151-residue chain is Putative pre-16S rRNA nuclease (151 aa).

The protein belongs to the YqgF nuclease family.

It localises to the cytoplasm. In terms of biological role, could be a nuclease involved in processing of the 5'-end of pre-16S rRNA. The polypeptide is Putative pre-16S rRNA nuclease (Thermosynechococcus vestitus (strain NIES-2133 / IAM M-273 / BP-1)).